A 340-amino-acid polypeptide reads, in one-letter code: Putative RRN3-like protein RRN3P2 (340 aa).

It belongs to the RRN3 family.

This Homo sapiens (Human) protein is Putative RRN3-like protein RRN3P2 (RRN3P2).